A 338-amino-acid polypeptide reads, in one-letter code: Gibberellin 2-beta-dioxygenase 8 (338 aa).

Residues 191–290 enclose the Fe2OG dioxygenase domain; that stretch reads NTCYLRMNRY…RFSTAYFMCP (100 aa). Positions 215, 217, and 271 each coordinate Fe cation. The active site involves R281. R281 provides a ligand contact to 2-oxoglutarate.

It belongs to the iron/ascorbate-dependent oxidoreductase family. GA2OX subfamily. Fe(2+) serves as cofactor.

The catalysed reaction is gibberellin A1 + 2-oxoglutarate + O2 = gibberellin A8 + succinate + CO2. It functions in the pathway plant hormone biosynthesis; gibberellin biosynthesis. In terms of biological role, catalyzes the 2-beta-hydroxylation of gibberellins (GA) precursors, rendering them unable to be converted to active GAs. Hydroxylates the C20-GA GA12 and GA53, but is not active on C19-GAs, like GA1, GA4, GA9 and GA20. This Arabidopsis thaliana (Mouse-ear cress) protein is Gibberellin 2-beta-dioxygenase 8 (GA2OX8).